The sequence spans 357 residues: UDP-arabinopyranose mutase 1 (357 aa).

Val2 bears the N-acetylvaline mark. The DXD motif signature appears at 110-112 (DDD). A glycan (N-linked (Glc...) arginine) is linked at Arg158.

This sequence belongs to the RGP family. In terms of assembly, heteromers with RGP2, RGP3, RGP4 and RGP5. The cofactor is Mn(2+). Mg(2+) serves as cofactor. Post-translationally, reversibly glycosylated in vitro by UDP-glucose, UDP-xylose and UDP-galactose, but not UDP-mannose. In terms of tissue distribution, predominantly expressed in shoot and root apical meristems. Expressed in epidermal cells of leaves, inflorescence stems and seed coat. Expressed in pollen.

The protein localises to the cytoplasm. It localises to the cytosol. Its subcellular location is the golgi apparatus. The enzyme catalyses UDP-beta-L-arabinofuranose = UDP-beta-L-arabinopyranose. Functionally, UDP-L-arabinose mutase involved in the biosynthesis of cell wall non-cellulosic polysaccharides. Catalyzes the interconvertion of UDP-L-arabinopyranose (UDP-Arap) and UDP-L-arabinofuranose (UDP-Araf) in vitro. Preferentially catalyzes the formation of UDP-Arap from UDP-Araf. At thermodynamic equilibrium in vitro the ratio of the pyranose form over the furanose form is 95:5. Is not active on other UDP-sugars (UDP-Gal, UDP-Xyl, UDP-Glc, GDP-Man and GDP-Fuc). Functions redundantly with RGP2 and is essential for proper cell walls and pollen development. Probably involved in the formation of the pectocellulosic cell wall layer intine. Is probably active as heteromer in vivo. In Arabidopsis thaliana (Mouse-ear cress), this protein is UDP-arabinopyranose mutase 1.